The primary structure comprises 156 residues: SsrA-binding protein (156 aa).

Belongs to the SmpB family.

Its subcellular location is the cytoplasm. Its function is as follows. Required for rescue of stalled ribosomes mediated by trans-translation. Binds to transfer-messenger RNA (tmRNA), required for stable association of tmRNA with ribosomes. tmRNA and SmpB together mimic tRNA shape, replacing the anticodon stem-loop with SmpB. tmRNA is encoded by the ssrA gene; the 2 termini fold to resemble tRNA(Ala) and it encodes a 'tag peptide', a short internal open reading frame. During trans-translation Ala-aminoacylated tmRNA acts like a tRNA, entering the A-site of stalled ribosomes, displacing the stalled mRNA. The ribosome then switches to translate the ORF on the tmRNA; the nascent peptide is terminated with the 'tag peptide' encoded by the tmRNA and targeted for degradation. The ribosome is freed to recommence translation, which seems to be the essential function of trans-translation. The polypeptide is SsrA-binding protein (Lactiplantibacillus plantarum (strain ATCC BAA-793 / NCIMB 8826 / WCFS1) (Lactobacillus plantarum)).